The chain runs to 1056 residues: Carbamoyl phosphate synthase large chain (1056 aa).

Residues 1-397 form a carboxyphosphate synthetic domain region; the sequence is MPRRTDIKKV…GFKKALRSID (397 aa). 12 residues coordinate ATP: Arg-127, Arg-167, Gly-173, Gly-174, Glu-206, Val-208, Glu-213, Gly-239, Val-240, His-241, Gln-282, and Glu-294. In terms of domain architecture, ATP-grasp 1 spans 131-323; sequence KALMQKIGEP…IARVAAKIAI (193 aa). Residues Gln-282, Glu-294, and Asn-296 each coordinate Mg(2+). Residues Gln-282, Glu-294, and Asn-296 each contribute to the Mn(2+) site. The interval 398 to 530 is oligomerization domain; the sequence is TDINTHTNHN…YSTHGVTTDI (133 aa). The tract at residues 531-919 is carbamoyl phosphate synthetic domain; that stretch reads IQNDKKKVLI…YKACISADNE (389 aa). An ATP-grasp 2 domain is found at 661 to 852; sequence SELLDALKIP…LAKVAAKVMI (192 aa). ATP-binding residues include Arg-697, Ser-736, Leu-738, Glu-743, Gly-768, Val-769, His-770, Ser-771, Gln-811, and Glu-823. 3 residues coordinate Mg(2+): Gln-811, Glu-823, and Asn-825. Gln-811, Glu-823, and Asn-825 together coordinate Mn(2+). One can recognise an MGS-like domain in the interval 918-1056; the sequence is NELPIEGNVF…PISHYLSEVE (139 aa). Residues 920–1056 form an allosteric domain region; that stretch reads LPIEGNVFIS…PISHYLSEVE (137 aa).

The protein belongs to the CarB family. Composed of two chains; the small (or glutamine) chain promotes the hydrolysis of glutamine to ammonia, which is used by the large (or ammonia) chain to synthesize carbamoyl phosphate. Tetramer of heterodimers (alpha,beta)4. The cofactor is Mg(2+). It depends on Mn(2+) as a cofactor.

It catalyses the reaction hydrogencarbonate + L-glutamine + 2 ATP + H2O = carbamoyl phosphate + L-glutamate + 2 ADP + phosphate + 2 H(+). It carries out the reaction hydrogencarbonate + NH4(+) + 2 ATP = carbamoyl phosphate + 2 ADP + phosphate + 2 H(+). It participates in amino-acid biosynthesis; L-arginine biosynthesis; carbamoyl phosphate from bicarbonate: step 1/1. The protein operates within pyrimidine metabolism; UMP biosynthesis via de novo pathway; (S)-dihydroorotate from bicarbonate: step 1/3. In terms of biological role, large subunit of the glutamine-dependent carbamoyl phosphate synthetase (CPSase). CPSase catalyzes the formation of carbamoyl phosphate from the ammonia moiety of glutamine, carbonate, and phosphate donated by ATP, constituting the first step of 2 biosynthetic pathways, one leading to arginine and/or urea and the other to pyrimidine nucleotides. The large subunit (synthetase) binds the substrates ammonia (free or transferred from glutamine from the small subunit), hydrogencarbonate and ATP and carries out an ATP-coupled ligase reaction, activating hydrogencarbonate by forming carboxy phosphate which reacts with ammonia to form carbamoyl phosphate. In Methanosphaerula palustris (strain ATCC BAA-1556 / DSM 19958 / E1-9c), this protein is Carbamoyl phosphate synthase large chain.